Here is a 189-residue protein sequence, read N- to C-terminus: MSRFIPIELHHASRLLNHGPTVLITSFDEQSQRRNIMAAAWSMPVEFEPPRVAIVVDKSTWTRELIEHNGKFGIVIPGVAATNWTWAVGSVSGRDEDKFNCYGIPVVRGPVFGLPLVEEKCLAWMECRLLPATSAQEEYDTLFGEVVSAAADARVFVEGRWQFDDDKLNTLHHLGAGTFVTSGKRVTAG.

The protein belongs to the flavoredoxin family. The cofactor is FMN.

This is an uncharacterized protein from Escherichia coli (strain K12).